The primary structure comprises 205 residues: Molybdenum cofactor guanylyltransferase (205 aa).

GTP is bound by residues 14–16, Lys-27, Asp-77, and Asp-107; that span reads LAG. Asp-107 is a Mg(2+) binding site.

This sequence belongs to the MobA family. As to quaternary structure, monomer. It depends on Mg(2+) as a cofactor.

The protein localises to the cytoplasm. The catalysed reaction is Mo-molybdopterin + GTP + H(+) = Mo-molybdopterin guanine dinucleotide + diphosphate. Its function is as follows. Transfers a GMP moiety from GTP to Mo-molybdopterin (Mo-MPT) cofactor (Moco or molybdenum cofactor) to form Mo-molybdopterin guanine dinucleotide (Mo-MGD) cofactor. In Burkholderia ambifaria (strain ATCC BAA-244 / DSM 16087 / CCUG 44356 / LMG 19182 / AMMD) (Burkholderia cepacia (strain AMMD)), this protein is Molybdenum cofactor guanylyltransferase.